The sequence spans 103 residues: Large ribosomal subunit protein bL21 (103 aa).

The protein belongs to the bacterial ribosomal protein bL21 family. In terms of assembly, part of the 50S ribosomal subunit. Contacts protein L20.

This protein binds to 23S rRNA in the presence of protein L20. This is Large ribosomal subunit protein bL21 from Kineococcus radiotolerans (strain ATCC BAA-149 / DSM 14245 / SRS30216).